A 161-amino-acid polypeptide reads, in one-letter code: Small ribosomal subunit protein uS19 (161 aa).

Positions 1–19 (MARQKKYSGKGGARKKNKQ) are enriched in basic residues. The disordered stretch occupies residues 1–26 (MARQKKYSGKGGARKKNKQKQSVAPR).

It belongs to the universal ribosomal protein uS19 family.

In terms of biological role, protein S19 forms a complex with S13 that binds strongly to the 16S ribosomal RNA. This Methanococcus maripaludis (strain C7 / ATCC BAA-1331) protein is Small ribosomal subunit protein uS19.